The primary structure comprises 129 residues: SOSS complex subunit C homolog (129 aa).

The segment at 105-129 is disordered; that stretch reads RLEPLPSPATTPTTPNAPPSHNISK.

Belongs to the SOSS-C family.

This is SOSS complex subunit C homolog from Drosophila erecta (Fruit fly).